The following is a 531-amino-acid chain: Zinc finger C2HC domain-containing protein 1C (531 aa).

Positions 16–45 (MLPHNTTEAPGPHSAKQDSYEQSDSSQQSL) are disordered. A compositionally biased stretch (low complexity) spans 35 to 44 (YEQSDSSQQS). Positions 209–264 (VQIRRLEAAGESLEEEIRRKQILLRGKLKKTEEELRRIQTQKEQAKENENRELQKI) form a coiled coil. Disordered stretches follow at residues 290–318 (FEEE…QLSD) and 334–387 (NKIR…PQLG). The segment covering 293 to 305 (EFSRDKREDETWE) has biased composition (basic and acidic residues). Residues 306–315 (RSQQNSSPFQ) show a composition bias toward polar residues. Over residues 335-345 (KIRDRVSEPSM) the composition is skewed to basic and acidic residues. A compositionally biased stretch (low complexity) spans 366 to 380 (SSLSMAPDSSGSSGS). 2 C2HC/C3H-type zinc fingers span residues 385–414 (QLGE…MQGS) and 493–522 (DYIQ…IKNR). Zn(2+) is bound by residues C389, C392, H404, C408, C497, C500, H512, and C516.

The protein belongs to the ZC2HC1 family. Zn(2+) serves as cofactor.

The polypeptide is Zinc finger C2HC domain-containing protein 1C (ZC2HC1C) (Macaca fascicularis (Crab-eating macaque)).